Consider the following 2515-residue polypeptide: Probable maltase-glucoamylase 2 (2515 aa).

Residues 1–9 (MARKLSVLE) lie on the Cytoplasmic side of the membrane. Residues 10 to 30 (VLLIIFCLIVVTIDILLLLLV) form a helical membrane-spanning segment. At 31–482 (LEETSDTSFT…DGVWIEMNEV (452 aa)) the chain is on the lumenal side. Residues 41–88 (PECPEIPQSERIDCTPDQEVTEDICRWQYKCCWSPVADANVPRCFFPW) enclose the P-type 1 domain. Disulfide bonds link cysteine 43/cysteine 72, cysteine 54/cysteine 71, and cysteine 65/cysteine 84. The segment at 152–865 (SHENINLVDG…MDKQPANFIV (714 aa)) is maltase. Residue asparagine 167 is glycosylated (N-linked (GlcNAc...) asparagine). Tyrosine 371 is subject to Sulfotyrosine. The N-linked (GlcNAc...) asparagine glycan is linked to asparagine 421. Residue glutamate 478 is the Nucleophile of the active site. The active site involves glutamate 481. Cystine bridges form between cysteine 608/cysteine 619, cysteine 916/cysteine 933, and cysteine 928/cysteine 946. Asparagine 613 carries N-linked (GlcNAc...) asparagine glycosylation. The P-type 2 domain maps to 904–950 (WNLPVSDLEKFNCYPDDPTASEESCRQRGCLWEDTSTPGVPTCYYDT). A glucoamylase region spans residues 1023-1766 (PLNTPPQPVG…GVNTYVTQVS (744 aa)). At tyrosine 1238 the chain carries Sulfotyrosine. Residue aspartate 1375 is the Nucleophile of the active site. Glutamate 1378 is a catalytic residue. Disordered stretches follow at residues 1816–1901 (TPTK…PITT), 1994–2015 (STTV…STNA), and 2037–2091 (TVPD…SSTT). The segment covering 1817–1831 (PTKTSTIPMSSHPSP) has biased composition (polar residues). Low complexity predominate over residues 1832–1901 (STTNATSSET…STNATVPITT (70 aa)). The N-linked (GlcNAc...) asparagine glycan is linked to asparagine 2249.

Belongs to the glycosyl hydrolase 31 family.

Its subcellular location is the membrane. It catalyses the reaction Hydrolysis of terminal (1-&gt;4)-linked alpha-D-glucose residues successively from non-reducing ends of the chains with release of beta-D-glucose.. This Homo sapiens (Human) protein is Probable maltase-glucoamylase 2.